A 628-amino-acid chain; its full sequence is tRNA uridine 5-carboxymethylaminomethyl modification enzyme MnmG (628 aa).

Residues 14 to 19 (GAGHAG), valine 126, and serine 181 each bind FAD. An NAD(+)-binding site is contributed by 273-287 (GPRYCPSIEDKVVRF). An FAD-binding site is contributed by glutamine 370.

This sequence belongs to the MnmG family. As to quaternary structure, homodimer. Heterotetramer of two MnmE and two MnmG subunits. The cofactor is FAD.

The protein resides in the cytoplasm. Functionally, NAD-binding protein involved in the addition of a carboxymethylaminomethyl (cmnm) group at the wobble position (U34) of certain tRNAs, forming tRNA-cmnm(5)s(2)U34. The polypeptide is tRNA uridine 5-carboxymethylaminomethyl modification enzyme MnmG (Bacillus licheniformis (strain ATCC 14580 / DSM 13 / JCM 2505 / CCUG 7422 / NBRC 12200 / NCIMB 9375 / NCTC 10341 / NRRL NRS-1264 / Gibson 46)).